Here is a 359-residue protein sequence, read N- to C-terminus: Phosphoserine aminotransferase (359 aa).

Residue Arg-41 coordinates L-glutamate. Pyridoxal 5'-phosphate contacts are provided by residues 75-76 (AS), Trp-101, Thr-152, Asp-171, and Gln-194. Lys-195 is subject to N6-(pyridoxal phosphate)lysine. A pyridoxal 5'-phosphate-binding site is contributed by 236-237 (NT).

The protein belongs to the class-V pyridoxal-phosphate-dependent aminotransferase family. SerC subfamily. In terms of assembly, homodimer. Pyridoxal 5'-phosphate is required as a cofactor.

It localises to the cytoplasm. It carries out the reaction O-phospho-L-serine + 2-oxoglutarate = 3-phosphooxypyruvate + L-glutamate. The catalysed reaction is 4-(phosphooxy)-L-threonine + 2-oxoglutarate = (R)-3-hydroxy-2-oxo-4-phosphooxybutanoate + L-glutamate. It participates in amino-acid biosynthesis; L-serine biosynthesis; L-serine from 3-phospho-D-glycerate: step 2/3. The protein operates within cofactor biosynthesis; pyridoxine 5'-phosphate biosynthesis; pyridoxine 5'-phosphate from D-erythrose 4-phosphate: step 3/5. Catalyzes the reversible conversion of 3-phosphohydroxypyruvate to phosphoserine and of 3-hydroxy-2-oxo-4-phosphonooxybutanoate to phosphohydroxythreonine. The polypeptide is Phosphoserine aminotransferase (Acinetobacter baumannii (strain ACICU)).